The sequence spans 593 residues: Uroporphyrinogen-III C-methyltransferase (593 aa).

The disordered stretch occupies residues 278 to 303; sequence ETSSSPNKKTKQETVTEGVVPPTDEN.

The protein belongs to the precorrin methyltransferase family.

The catalysed reaction is uroporphyrinogen III + 2 S-adenosyl-L-methionine = precorrin-2 + 2 S-adenosyl-L-homocysteine + H(+). Functionally, siroheme synthase involved in methionine biosynthesis. The sequence is that of Uroporphyrinogen-III C-methyltransferase from Saccharomyces cerevisiae (strain ATCC 204508 / S288c) (Baker's yeast).